Consider the following 691-residue polypeptide: Pleckstrin homology domain-containing family G member 7 (691 aa).

Disordered stretches follow at residues 1–48 (MEKT…ISTS) and 109–140 (TSEPERALNAADSLEPQTRPTDKYLPPELQPV). Residues 313–488 (MIFMNTLRYL…EGKVKWLDNF (176 aa)) form the DH domain. An N-linked (GlcNAc...) asparagine glycan is attached at Asn-395. A PH domain is found at 535 to 668 (HLLYEGKLTL…WMAQITTAIS (134 aa)).

This is Pleckstrin homology domain-containing family G member 7 from Homo sapiens (Human).